The chain runs to 603 residues: MVDQRHIRNFCIIAHIDHGKSTLADRLIEFTGVLTKREMTDQVLDNMELERERGITIKAQSVRMDYVADDGEQYVLNLIDTPGHVDFTYEVSRALAACEGALLVVDASQGIEAQTLANVYMALEHDLEIIPVINKIDLPAADPEKVKKEIEEVIGLDTSIAILASAKTGIGMKEILEAVVNFVPPPKGDRRAPLRALIYDSFYDSYKGVITYFRIFEGTVRKGDRIRFMATGKEFIVDELYIFRPGLTPVEELTAGEVGALAATIREVKHVRVGDTITLADNPAAEPLPGYRKATPMVFTGLYPVETNDYGRLRDALEKLQLNDASLSFEPETSEALGFGFRCGFLGLLHMDVIQERLEREFDLNLITTAPNVVYRVNMTSGEQIMIENPANWPDPSKIESVEEPVVRASIITPTEYVGPLMELCQDRRGTFLNMEYLNEKRVNLHYKLPLAEIMYDFFDQLKTRSRGYASFDYEVTGYEPSDMVKMDILVHGQPVDALSCIVHREKAQKLGRALVQKLRKLIPRHLFEVPIQAAVGNKILARENIAPLRKDVLAKCYGGDVTRKRKLLEKQKEGKKRMKAVGSVEIPQEAFMAVLSTDPDED.

One can recognise a tr-type G domain in the interval 5 to 187; sequence RHIRNFCIIA…AVVNFVPPPK (183 aa). GTP-binding positions include 17-22 and 134-137; these read DHGKST and NKID.

Belongs to the TRAFAC class translation factor GTPase superfamily. Classic translation factor GTPase family. LepA subfamily.

The protein resides in the cell membrane. The catalysed reaction is GTP + H2O = GDP + phosphate + H(+). In terms of biological role, required for accurate and efficient protein synthesis under certain stress conditions. May act as a fidelity factor of the translation reaction, by catalyzing a one-codon backward translocation of tRNAs on improperly translocated ribosomes. Back-translocation proceeds from a post-translocation (POST) complex to a pre-translocation (PRE) complex, thus giving elongation factor G a second chance to translocate the tRNAs correctly. Binds to ribosomes in a GTP-dependent manner. This is Elongation factor 4 from Symbiobacterium thermophilum (strain DSM 24528 / JCM 14929 / IAM 14863 / T).